We begin with the raw amino-acid sequence, 108 residues long: MDAQGDAGAQGGSQGPRPSNKRLQQTQAQVDEVVGIMKVNVEKVLERDQKLSQLDDRADALQEGASQFEKSAATLKRKYWWKNIKMMIIMCAIVVILIIIIVLWAGGK.

The tract at residues 1–25 (MDAQGDAGAQGGSQGPRPSNKRLQQ) is disordered. Residues 1–85 (MDAQGDAGAQ…KRKYWWKNIK (85 aa)) lie on the Cytoplasmic side of the membrane. Residues 22–82 (RLQQTQAQVD…ATLKRKYWWK (61 aa)) enclose the v-SNARE coiled-coil homology domain. The chain crosses the membrane as a helical; Anchor for type IV membrane protein span at residues 86-106 (MMIIMCAIVVILIIIIVLWAG). At 107–108 (GK) the chain is on the extracellular side.

The protein belongs to the synaptobrevin family. As to quaternary structure, part of the SNARE core complex containing CBG09569/SNAP25, snb-1/VAMP2 and CBG03570/STX1A. This complex binds to cpx-1/CPLX1.

Its subcellular location is the cytoplasmic vesicle. It is found in the secretory vesicle. The protein localises to the synaptic vesicle membrane. The protein resides in the cell membrane. It localises to the synapse. Its subcellular location is the synaptosome. Its function is as follows. Involved in the targeting and/or fusion of transport vesicles to their target membrane. Acts in neuronal exocytosis of synaptic transmission. Likely to have a role in cholinergic transmisson. Required for viability, coordinated movement and M3 pharynx motor neuron function. The protein is Synaptobrevin-1 of Caenorhabditis briggsae.